A 129-amino-acid polypeptide reads, in one-letter code: Protein Turandot A (129 aa).

The signal sequence occupies residues 1–21 (MNSSTALMCFALLLISPLCMG). N-linked (GlcNAc...) asparagine glycosylation is present at N49.

Belongs to the Turandot family. Expressed in the fat body (at protein level).

Its subcellular location is the secreted. Functionally, a humoral factor that plays a role in stress tolerance; gives increased resistance to the lethal effects of bacterial challenge and stress. Regulated by the JAK/STAT pathway and NF-KB-like Relish pathway in the fat body, upd3 in the hemocytes and Mekk1 in response to septic injury and consequent immune response. The sequence is that of Protein Turandot A from Drosophila melanogaster (Fruit fly).